The following is a 187-amino-acid chain: 2-oxoglutarate synthase subunit KorC (187 aa).

As to quaternary structure, heterotetramer of the KorA, KorB, KorC and KorD subunits.

The enzyme catalyses 2 oxidized [2Fe-2S]-[ferredoxin] + 2-oxoglutarate + CoA = succinyl-CoA + 2 reduced [2Fe-2S]-[ferredoxin] + CO2 + H(+). This is 2-oxoglutarate synthase subunit KorC (korC) from Methanocaldococcus jannaschii (strain ATCC 43067 / DSM 2661 / JAL-1 / JCM 10045 / NBRC 100440) (Methanococcus jannaschii).